The primary structure comprises 201 residues: Recombination protein RecR (201 aa).

The C4-type zinc-finger motif lies at 57–72 (CRYCRNLSDAEVCLLC). In terms of domain architecture, Toprim spans 80-175 (QQICVVETPA…QATRLAYGVP (96 aa)).

This sequence belongs to the RecR family.

Its function is as follows. May play a role in DNA repair. It seems to be involved in an RecBC-independent recombinational process of DNA repair. It may act with RecF and RecO. This Dichelobacter nodosus (strain VCS1703A) protein is Recombination protein RecR.